Consider the following 300-residue polypeptide: 4-hydroxy-tetrahydrodipicolinate synthase (300 aa).

Pyruvate is bound at residue threonine 46. The active-site Proton donor/acceptor is tyrosine 134. Lysine 162 (schiff-base intermediate with substrate) is an active-site residue. Valine 204 is a pyruvate binding site.

It belongs to the DapA family. As to quaternary structure, homotetramer; dimer of dimers.

It localises to the cytoplasm. The catalysed reaction is L-aspartate 4-semialdehyde + pyruvate = (2S,4S)-4-hydroxy-2,3,4,5-tetrahydrodipicolinate + H2O + H(+). The protein operates within amino-acid biosynthesis; L-lysine biosynthesis via DAP pathway; (S)-tetrahydrodipicolinate from L-aspartate: step 3/4. Catalyzes the condensation of (S)-aspartate-beta-semialdehyde [(S)-ASA] and pyruvate to 4-hydroxy-tetrahydrodipicolinate (HTPA). The polypeptide is 4-hydroxy-tetrahydrodipicolinate synthase (Heliobacterium modesticaldum (strain ATCC 51547 / Ice1)).